A 328-amino-acid polypeptide reads, in one-letter code: Biotin synthase (328 aa).

The 220-residue stretch at 41-260 (TAIETASLLS…VALARILMPA (220 aa)) folds into the Radical SAM core domain. 3 residues coordinate [4Fe-4S] cluster: Cys-56, Cys-60, and Cys-63. [2Fe-2S] cluster-binding residues include Cys-100, Cys-131, Cys-191, and Arg-264.

It belongs to the radical SAM superfamily. Biotin synthase family. Homodimer. [4Fe-4S] cluster serves as cofactor. It depends on [2Fe-2S] cluster as a cofactor.

The catalysed reaction is (4R,5S)-dethiobiotin + (sulfur carrier)-SH + 2 reduced [2Fe-2S]-[ferredoxin] + 2 S-adenosyl-L-methionine = (sulfur carrier)-H + biotin + 2 5'-deoxyadenosine + 2 L-methionine + 2 oxidized [2Fe-2S]-[ferredoxin]. The protein operates within cofactor biosynthesis; biotin biosynthesis; biotin from 7,8-diaminononanoate: step 2/2. Functionally, catalyzes the conversion of dethiobiotin (DTB) to biotin by the insertion of a sulfur atom into dethiobiotin via a radical-based mechanism. This Cereibacter sphaeroides (strain ATCC 17029 / ATH 2.4.9) (Rhodobacter sphaeroides) protein is Biotin synthase.